Reading from the N-terminus, the 738-residue chain is Alanine--tRNA ligase (738 aa).

Zn(2+) contacts are provided by histidine 564, histidine 568, cysteine 666, and histidine 670.

The protein belongs to the class-II aminoacyl-tRNA synthetase family. Homotetramer. Zn(2+) is required as a cofactor.

It is found in the cytoplasm. It catalyses the reaction tRNA(Ala) + L-alanine + ATP = L-alanyl-tRNA(Ala) + AMP + diphosphate. Its function is as follows. Catalyzes the attachment of alanine to tRNA(Ala) in a two-step reaction: alanine is first activated by ATP to form Ala-AMP and then transferred to the acceptor end of tRNA(Ala). Also edits incorrectly charged Ser-tRNA(Ala) and Gly-tRNA(Ala) via its editing domain. This is Alanine--tRNA ligase (alaS) from Yersinia pestis bv. Antiqua (strain Antiqua).